We begin with the raw amino-acid sequence, 173 residues long: RNA pyrophosphohydrolase (173 aa).

The Nudix hydrolase domain maps to Gly6–Arg149. Positions Gly38–Gly59 match the Nudix box motif.

It belongs to the Nudix hydrolase family. RppH subfamily. A divalent metal cation is required as a cofactor.

Accelerates the degradation of transcripts by removing pyrophosphate from the 5'-end of triphosphorylated RNA, leading to a more labile monophosphorylated state that can stimulate subsequent ribonuclease cleavage. The sequence is that of RNA pyrophosphohydrolase from Thioalkalivibrio sulfidiphilus (strain HL-EbGR7).